Reading from the N-terminus, the 374-residue chain is Ribosomal RNA large subunit methyltransferase G (374 aa).

The protein belongs to the methyltransferase superfamily. RlmG family.

Its subcellular location is the cytoplasm. It carries out the reaction guanosine(1835) in 23S rRNA + S-adenosyl-L-methionine = N(2)-methylguanosine(1835) in 23S rRNA + S-adenosyl-L-homocysteine + H(+). Functionally, specifically methylates the guanine in position 1835 (m2G1835) of 23S rRNA. This chain is Ribosomal RNA large subunit methyltransferase G, found in Pseudomonas putida (strain W619).